Reading from the N-terminus, the 562-residue chain is Berberine bridge enzyme-like C-1 (562 aa).

Positions 1–19 are cleaved as a signal peptide; it reads MFPLIILISFSFTFLSASA. Residues N29 and N41 are each glycosylated (N-linked (GlcNAc...) asparagine). The cysteines at positions 33 and 90 are disulfide-linked. The 177-residue stretch at 68 to 244 folds into the FAD-binding PCMH-type domain; that stretch reads NMPKPTVIIL…YAWKIRLVKV (177 aa). H105 is subject to Pros-8alpha-FAD histidine. N-linked (GlcNAc...) asparagine glycans are attached at residues N359, N498, and N558.

The protein belongs to the oxygen-dependent FAD-linked oxidoreductase family. The cofactor is FAD. In terms of tissue distribution, mostly expressed in roots.

The protein resides in the vacuole. Its pathway is alkaloid biosynthesis; nicotine biosynthesis. Functionally, involved in the biosynthesis of pyridine alkaloid natural products, leading mainly to the production of anabasine, anatabine, nicotine and nornicotine, effective deterrents against herbivores with antiparasitic and pesticide properties (neurotoxins); nornicotine serves as the precursor in the synthesis of the carcinogen compound N'-nitrosonornicotine (NNN). Catalyzes a late oxidation step subsequent to the pyridine ring condensation reaction in the biosynthesis of alkaloids. In Nicotiana tabacum (Common tobacco), this protein is Berberine bridge enzyme-like C-1.